The chain runs to 266 residues: Dihydropteroate synthase (266 aa).

The Pterin-binding domain occupies 12 to 260 (AAIMGILNVT…DVKANQDIVA (249 aa)). N19 contributes to the Mg(2+) binding site. (7,8-dihydropterin-6-yl)methyl diphosphate is bound by residues T59, D93, N112, D176, K212, and 248–250 (RVH).

It belongs to the DHPS family. Homodimer or homotrimer. The cofactor is Mg(2+).

It catalyses the reaction (7,8-dihydropterin-6-yl)methyl diphosphate + 4-aminobenzoate = 7,8-dihydropteroate + diphosphate. Its pathway is cofactor biosynthesis; tetrahydrofolate biosynthesis; 7,8-dihydrofolate from 2-amino-4-hydroxy-6-hydroxymethyl-7,8-dihydropteridine diphosphate and 4-aminobenzoate: step 1/2. Functionally, catalyzes the condensation of para-aminobenzoate (pABA) with 6-hydroxymethyl-7,8-dihydropterin diphosphate (DHPt-PP) to form 7,8-dihydropteroate (H2Pte), the immediate precursor of folate derivatives. In Streptococcus pyogenes serotype M1, this protein is Dihydropteroate synthase (folP).